A 414-amino-acid polypeptide reads, in one-letter code: Cytochrome c-554 (414 aa).

A signal peptide spans 1 to 24 (MQSSRPSDRQLAIVVSVAVGIVVA). Residues M110, C131, C134, H135, M154, C179, C182, H183, M283, C294, C297, H298, C378, C381, and H382 each contribute to the heme site.

In terms of processing, binds 4 heme groups per subunit. Post-translationally, the N-terminus is blocked.

The protein localises to the periplasm. Its function is as follows. Serves as the immediate electron donor to the oxidized BChl2 (bacteriochlorophyll dimer) that is oxidized in the first step of light-induced charge separation. Can also oxidize low-potential substrates. In Chloroflexus aurantiacus (strain ATCC 29366 / DSM 635 / J-10-fl), this protein is Cytochrome c-554 (puf2C).